The following is a 431-amino-acid chain: Protein EARLY STARVATION 1, chloroplastic (431 aa).

Residues 1-19 (MAACSRGLVARPFDLTARG) constitute a chloroplast transit peptide. Disordered regions lie at residues 65-126 (GNKP…DTGI) and 403-431 (GVYPTIDFSASSPAPPSDDPPGMPPSPLE). A compositionally biased stretch (pro residues) spans 415 to 431 (PAPPSDDPPGMPPSPLE).

Belongs to the ESV1 family.

It is found in the plastid. It localises to the chloroplast stroma. Its function is as follows. Binds preferentially to highly ordered alpha-glucans, such as starch and crystalline maltodextrins. Involved in the organization of the starch granule matrix, thus influencing starch turnover by modulating the accessibility of starch polymers to modifying and degrading enzymes. Required for the control of starch degradation in leaves and starch distribution in nonphotosynthetic parts. Promotes gravitropic responses, negative in shoots but positive in roots, by facilitating starch granules (statoliths) formation in hypocotyls and roots columella. Facilitates tight packing of starch granules in grains. The polypeptide is Protein EARLY STARVATION 1, chloroplastic (Oryza sativa subsp. indica (Rice)).